The primary structure comprises 396 residues: Ribosomal RNA large subunit methyltransferase I (396 aa).

The PUA domain maps to 2 to 79 (AIRIKLKPGR…REEEIDREFF (78 aa)).

The protein belongs to the methyltransferase superfamily. RlmI family.

It is found in the cytoplasm. It catalyses the reaction cytidine(1962) in 23S rRNA + S-adenosyl-L-methionine = 5-methylcytidine(1962) in 23S rRNA + S-adenosyl-L-homocysteine + H(+). Its function is as follows. Specifically methylates the cytosine at position 1962 (m5C1962) of 23S rRNA. The polypeptide is Ribosomal RNA large subunit methyltransferase I (Shewanella baltica (strain OS155 / ATCC BAA-1091)).